Consider the following 430-residue polypeptide: Pyrokinin-1 receptor (430 aa).

Residues 1-16 lie on the Extracellular side of the membrane; it reads MSAGNMSHDLGPPRDP. An N-linked (GlcNAc...) asparagine glycan is attached at Asn-5. The chain crosses the membrane as a helical span at residues 17–37; it reads LAIVIPVTVVYSLIFITGVVG. Topologically, residues 38-53 are cytoplasmic; that stretch reads NISTCIVIKKNRSMHT. Residues 54–74 form a helical membrane-spanning segment; that stretch reads ATNYYLFSLAISDFLLLLSGV. Over 75 to 96 the chain is Extracellular; that stretch reads PQEVSYIWSKYPYVFGEYICIG. Cysteines 94 and 171 form a disulfide. The chain crosses the membrane as a helical span at residues 97–117; the sequence is RGLLAETSANATVLTITAFTV. Residues 118–140 are Cytoplasmic-facing; it reads ERYIAICHPFLGQAMSKLSRAIR. The helical transmembrane segment at 141–161 threads the bilayer; sequence IIVLVWIMAIVTAIPQAAQFG. At 162–185 the chain is on the extracellular side; that stretch reads IEHYSGVEQCGIVRVIVKHSFQLS. A helical membrane pass occupies residues 186–206; it reads TFIFFLAPMSIILVLYLLIGV. At 207-281 the chain is on the cytoplasmic side; sequence HLYRSTLVEG…GRLNHYGTRR (75 aa). Residues 282-302 form a helical membrane-spanning segment; sequence VLRMLVAVVVCFFLCWAPFHA. Residues 303–321 are Extracellular-facing; the sequence is QRLIAIYAPARGAKLRDQH. The chain crosses the membrane as a helical span at residues 322–342; that stretch reads EFVYTVMTYVSGVLYYLSTCI. At 343-430 the chain is on the cytoplasmic side; the sequence is NPLLYNIMSH…QYAMIGVQVN (88 aa). Residues 388-397 show a composition bias toward polar residues; the sequence is TNSSQTQRFS. The segment at 388–413 is disordered; the sequence is TNSSQTQRFSIESAEQPKPSIMQNPT.

It belongs to the G-protein coupled receptor 1 family.

The protein resides in the cell membrane. Receptor for the neuropeptide CAP-3/pyrokinin-1 (TGPSASSGLWFGPRL-amide). Also activated weakly by other neuropeptides terminating in the sequence PRL-amide including pyrokinin-2, Hug-gamma, and ecdysis-triggering-hormone-1. The activity of this receptor is mediated by G proteins which activate a phosphatidyl-inositol-calcium second messenger system. The chain is Pyrokinin-1 receptor from Drosophila melanogaster (Fruit fly).